Here is a 321-residue protein sequence, read N- to C-terminus: Dolichyl N-acetyl-alpha-D-glucosaminyl phosphate 3-beta-D-2,3-diacetamido-2,3-dideoxy-beta-D-glucuronosyltransferase (321 aa).

The next 2 membrane-spanning stretches (helical) occupy residues 252 to 272 (FGFL…FIYI) and 290 to 310 (LYIA…YGFF).

The protein belongs to the glycosyltransferase 2 family.

It is found in the cell membrane. The catalysed reaction is an archaeal dolichyl N-acetyl-alpha-D-glucosaminyl phosphate + UDP-2,3-diacetamido-2,3-dideoxy-alpha-D-glucuronate = an archaeal dolichyl 3-O-(2,3-diacetamido-2,3-dideoxy- beta-D-glucuronosyl)-N-acetyl- alpha-D-glucosaminyl phosphate + UDP + H(+). It participates in cell surface structure biogenesis; S-layer biogenesis. Its pathway is protein modification; protein glycosylation. Its function is as follows. Involved in the assembly of an N-linked disaccharide that decorates the S-layer glycoprotein and flagellins. AglC catalyzes the transfer of 2,3-diacetamido-2,3-dideoxy-alpha-D-glucuronic acid (Glc-2,3-diNAcA) from uridine 5'-diphospho 2,3-diacetamido-2,3-dideoxy-alpha-D-glucuronic acid (UDP-Glc-2,3-diNAcA) to the AglK product Dol-P-GlcNAc to yield Dol-P-GlcNAc-Glc-2,3-diNAcA. AglC is specific for the monophosphate-linked Dol-P-GlcNAc. This Methanococcus voltae protein is Dolichyl N-acetyl-alpha-D-glucosaminyl phosphate 3-beta-D-2,3-diacetamido-2,3-dideoxy-beta-D-glucuronosyltransferase.